The chain runs to 244 residues: tRNA (guanine-N(7)-)-methyltransferase (244 aa).

4 residues coordinate S-adenosyl-L-methionine: E75, E100, D127, and D150. D150 is a catalytic residue. Substrate contacts are provided by residues K154, D186, and T223 to E226.

This sequence belongs to the class I-like SAM-binding methyltransferase superfamily. TrmB family.

The catalysed reaction is guanosine(46) in tRNA + S-adenosyl-L-methionine = N(7)-methylguanosine(46) in tRNA + S-adenosyl-L-homocysteine. It functions in the pathway tRNA modification; N(7)-methylguanine-tRNA biosynthesis. In terms of biological role, catalyzes the formation of N(7)-methylguanine at position 46 (m7G46) in tRNA. This chain is tRNA (guanine-N(7)-)-methyltransferase, found in Xylella fastidiosa (strain M12).